A 599-amino-acid polypeptide reads, in one-letter code: Sulfite reductase [NADPH] flavoprotein alpha-component (599 aa).

The 139-residue stretch at 64–202 (ITIISASQTG…AASEWRARVV (139 aa)) folds into the Flavodoxin-like domain. Residues 70 to 75 (SQTGNA), 117 to 120 (STQG), and 153 to 162 (LGDSSYEFFC) contribute to the FMN site. Residues 234–448 (DAPLVASLSV…IEHNDNFRLP (215 aa)) form the FAD-binding FR-type domain. FAD is bound by residues Thr322, Ala356, 386-389 (RLYS), 404-406 (TVG), Tyr410, and 419-422 (GGAS). NADP(+) is bound by residues 519 to 520 (SR), 525 to 529 (KVYVQ), and Asp561. FAD is bound at residue Tyr599.

The protein belongs to the NADPH-dependent sulphite reductase flavoprotein subunit CysJ family. This sequence in the N-terminal section; belongs to the flavodoxin family. It in the C-terminal section; belongs to the flavoprotein pyridine nucleotide cytochrome reductase family. Alpha(8)-beta(8). The alpha component is a flavoprotein, the beta component is a hemoprotein. Requires FAD as cofactor. The cofactor is FMN.

The catalysed reaction is hydrogen sulfide + 3 NADP(+) + 3 H2O = sulfite + 3 NADPH + 4 H(+). It participates in sulfur metabolism; hydrogen sulfide biosynthesis; hydrogen sulfide from sulfite (NADPH route): step 1/1. Its function is as follows. Component of the sulfite reductase complex that catalyzes the 6-electron reduction of sulfite to sulfide. This is one of several activities required for the biosynthesis of L-cysteine from sulfate. The flavoprotein component catalyzes the electron flow from NADPH -&gt; FAD -&gt; FMN to the hemoprotein component. This is Sulfite reductase [NADPH] flavoprotein alpha-component from Escherichia coli (strain ATCC 8739 / DSM 1576 / NBRC 3972 / NCIMB 8545 / WDCM 00012 / Crooks).